A 353-amino-acid polypeptide reads, in one-letter code: Ferrochelatase (353 aa).

Fe cation is bound by residues His-223 and Glu-304.

This sequence belongs to the ferrochelatase family.

The protein localises to the cytoplasm. It catalyses the reaction heme b + 2 H(+) = protoporphyrin IX + Fe(2+). Its pathway is porphyrin-containing compound metabolism; protoheme biosynthesis; protoheme from protoporphyrin-IX: step 1/1. In terms of biological role, catalyzes the ferrous insertion into protoporphyrin IX. The protein is Ferrochelatase of Mesorhizobium japonicum (strain LMG 29417 / CECT 9101 / MAFF 303099) (Mesorhizobium loti (strain MAFF 303099)).